A 681-amino-acid polypeptide reads, in one-letter code: Heat shock 70 kDa protein (681 aa).

Over residues 655-665 the composition is skewed to gly residues; the sequence is NFPGGMPGAGM. The segment at 655–681 is disordered; that stretch reads NFPGGMPGAGMPGNAPAGSGPTVEEVD. A compositionally biased stretch (low complexity) spans 666-675; that stretch reads PGNAPAGSGP.

This sequence belongs to the heat shock protein 70 family.

The sequence is that of Heat shock 70 kDa protein from Plasmodium falciparum.